Consider the following 382-residue polypeptide: S-adenosylmethionine synthase (382 aa).

Residue H16 coordinates ATP. D18 provides a ligand contact to Mg(2+). Position 44 (E44) interacts with K(+). 2 residues coordinate L-methionine: E57 and Q100. The interval 100–110 is flexible loop; the sequence is QSADIAIGVDE. Residues 165 to 167, D240, 246 to 247, A263, and K267 contribute to the ATP site; these read DAK and RK. L-methionine is bound at residue D240. K271 provides a ligand contact to L-methionine.

Belongs to the AdoMet synthase family. Homotetramer; dimer of dimers. Mg(2+) serves as cofactor. Requires K(+) as cofactor.

It is found in the cytoplasm. The catalysed reaction is L-methionine + ATP + H2O = S-adenosyl-L-methionine + phosphate + diphosphate. It functions in the pathway amino-acid biosynthesis; S-adenosyl-L-methionine biosynthesis; S-adenosyl-L-methionine from L-methionine: step 1/1. Functionally, catalyzes the formation of S-adenosylmethionine (AdoMet) from methionine and ATP. The overall synthetic reaction is composed of two sequential steps, AdoMet formation and the subsequent tripolyphosphate hydrolysis which occurs prior to release of AdoMet from the enzyme. The chain is S-adenosylmethionine synthase from Alcanivorax borkumensis (strain ATCC 700651 / DSM 11573 / NCIMB 13689 / SK2).